We begin with the raw amino-acid sequence, 626 residues long: tRNA uridine 5-carboxymethylaminomethyl modification enzyme MnmG (626 aa).

13-18 (GGGHAG) provides a ligand contact to FAD. An NAD(+)-binding site is contributed by 273-287 (GPRYCPSIEDKIHRF).

Belongs to the MnmG family. As to quaternary structure, homodimer. Heterotetramer of two MnmE and two MnmG subunits. Requires FAD as cofactor.

It localises to the cytoplasm. In terms of biological role, NAD-binding protein involved in the addition of a carboxymethylaminomethyl (cmnm) group at the wobble position (U34) of certain tRNAs, forming tRNA-cmnm(5)s(2)U34. This is tRNA uridine 5-carboxymethylaminomethyl modification enzyme MnmG from Acinetobacter baumannii (strain AYE).